Reading from the N-terminus, the 491-residue chain is Ketol-acid reductoisomerase (NADP(+)) (491 aa).

One can recognise a KARI N-terminal Rossmann domain in the interval A15–S208. NADP(+)-binding positions include C45–Q48, R68, R76, S78, and D108–Q110. H132 is an active-site residue. G158 provides a ligand contact to NADP(+). KARI C-terminal knotted domains follow at residues S209–Q344 and F345–M484. Residues D217, E221, E389, and E393 each contribute to the Mg(2+) site. S414 provides a ligand contact to substrate.

This sequence belongs to the ketol-acid reductoisomerase family. Mg(2+) is required as a cofactor.

It catalyses the reaction (2R)-2,3-dihydroxy-3-methylbutanoate + NADP(+) = (2S)-2-acetolactate + NADPH + H(+). The enzyme catalyses (2R,3R)-2,3-dihydroxy-3-methylpentanoate + NADP(+) = (S)-2-ethyl-2-hydroxy-3-oxobutanoate + NADPH + H(+). It functions in the pathway amino-acid biosynthesis; L-isoleucine biosynthesis; L-isoleucine from 2-oxobutanoate: step 2/4. Its pathway is amino-acid biosynthesis; L-valine biosynthesis; L-valine from pyruvate: step 2/4. In terms of biological role, involved in the biosynthesis of branched-chain amino acids (BCAA). Catalyzes an alkyl-migration followed by a ketol-acid reduction of (S)-2-acetolactate (S2AL) to yield (R)-2,3-dihydroxy-isovalerate. In the isomerase reaction, S2AL is rearranged via a Mg-dependent methyl migration to produce 3-hydroxy-3-methyl-2-ketobutyrate (HMKB). In the reductase reaction, this 2-ketoacid undergoes a metal-dependent reduction by NADPH to yield (R)-2,3-dihydroxy-isovalerate. In Salmonella choleraesuis (strain SC-B67), this protein is Ketol-acid reductoisomerase (NADP(+)).